The chain runs to 289 residues: LysM and putative peptidoglycan-binding domain-containing protein 4 (289 aa).

The disordered stretch occupies residues 1–23 (MRLREGPTHSFQPPSSVHSSLGS). The Extracellular portion of the chain corresponds to 1–208 (MRLREGPTHS…PASGADWGIR (208 aa)). The span at 9-23 (HSFQPPSSVHSSLGS) shows a compositional bias: polar residues. Asn-30 and Asn-59 each carry an N-linked (GlcNAc...) asparagine glycan. The LysM domain maps to 71–115 (LERAITEDDNLNKLALQYGCKVSDIKRVNNLITDQDIYALKTIKI). N-linked (GlcNAc...) asparagine glycans are attached at residues Asn-134 and Asn-178. Residues 209 to 229 (WWNAVFIMLLVGIVLPVFYIV) traverse the membrane as a helical segment. Topologically, residues 230–289 (YFKTQGDSEGTFSIEGRTNVSTSLSPHTNTGHSMEQMTQRTSGFSPGLLQDTHKLLNPGG) are cytoplasmic. Positions 252-272 (SLSPHTNTGHSMEQMTQRTSG) are disordered.

The protein resides in the membrane. The sequence is that of LysM and putative peptidoglycan-binding domain-containing protein 4 (lysmd4) from Xenopus laevis (African clawed frog).